Here is a 121-residue protein sequence, read N- to C-terminus: MIFELSRANVADNSGAKQVGVIRVLGGSKKKVAEIGDVVICSVKKALPSGDVKAGQVLKAVVVRTKRNTYRSNGSYIRFDDNAVVILKDDGTPVGTRVFGPVAREIREKYPKIVSLALEVL.

It belongs to the universal ribosomal protein uL14 family. As to quaternary structure, part of the 50S ribosomal subunit. Forms a cluster with proteins L3 and L19. In the 70S ribosome, L14 and L19 interact and together make contacts with the 16S rRNA in bridges B5 and B8.

Functionally, binds to 23S rRNA. Forms part of two intersubunit bridges in the 70S ribosome. The sequence is that of Large ribosomal subunit protein uL14 from Mycoplasmopsis synoviae (strain 53) (Mycoplasma synoviae).